The following is a 427-amino-acid chain: Gamma-glutamyl phosphate reductase (427 aa).

It belongs to the gamma-glutamyl phosphate reductase family.

The protein localises to the cytoplasm. The enzyme catalyses L-glutamate 5-semialdehyde + phosphate + NADP(+) = L-glutamyl 5-phosphate + NADPH + H(+). It participates in amino-acid biosynthesis; L-proline biosynthesis; L-glutamate 5-semialdehyde from L-glutamate: step 2/2. Catalyzes the NADPH-dependent reduction of L-glutamate 5-phosphate into L-glutamate 5-semialdehyde and phosphate. The product spontaneously undergoes cyclization to form 1-pyrroline-5-carboxylate. The chain is Gamma-glutamyl phosphate reductase from Brucella ovis (strain ATCC 25840 / 63/290 / NCTC 10512).